Reading from the N-terminus, the 263-residue chain is HTH-type transcriptional repressor NanR (263 aa).

The disordered stretch occupies residues 1–24 (MSPMNAFDSQTEDSSPAIGRNLRS). An HTH gntR-type domain is found at 30–98 (KKLSEMVEEE…NGERARVSRP (69 aa)). The H-T-H motif DNA-binding region spans 58 to 77 (ERELMAFFNVGRPSVREALA).

The protein belongs to the NanR family.

In terms of biological role, transcriptional repressor that controls expression of the genes required for the catabolism of sialic acids. The sequence is that of HTH-type transcriptional repressor NanR from Escherichia coli O127:H6 (strain E2348/69 / EPEC).